The sequence spans 273 residues: 4-hydroxy-tetrahydrodipicolinate reductase (273 aa).

NAD(+)-binding positions include 12–17 and E38; that span reads GAGGRM. R39 contributes to the NADP(+) binding site. Residues 102-104 and 126-129 contribute to the NAD(+) site; these read GTT and AANF. H159 acts as the Proton donor/acceptor in catalysis. H160 provides a ligand contact to (S)-2,3,4,5-tetrahydrodipicolinate. Residue K163 is the Proton donor of the active site. Position 169 to 170 (169 to 170) interacts with (S)-2,3,4,5-tetrahydrodipicolinate; it reads GT.

Belongs to the DapB family. As to quaternary structure, homotetramer.

The protein resides in the cytoplasm. The catalysed reaction is (S)-2,3,4,5-tetrahydrodipicolinate + NAD(+) + H2O = (2S,4S)-4-hydroxy-2,3,4,5-tetrahydrodipicolinate + NADH + H(+). It carries out the reaction (S)-2,3,4,5-tetrahydrodipicolinate + NADP(+) + H2O = (2S,4S)-4-hydroxy-2,3,4,5-tetrahydrodipicolinate + NADPH + H(+). The protein operates within amino-acid biosynthesis; L-lysine biosynthesis via DAP pathway; (S)-tetrahydrodipicolinate from L-aspartate: step 4/4. Its function is as follows. Catalyzes the conversion of 4-hydroxy-tetrahydrodipicolinate (HTPA) to tetrahydrodipicolinate. This is 4-hydroxy-tetrahydrodipicolinate reductase from Salmonella typhimurium (strain LT2 / SGSC1412 / ATCC 700720).